Consider the following 243-residue polypeptide: MAEPRYRRILLKLSGEALAGKGTHSIDPNMLDYYAEEIERVHRHGVQVAVVLGGGNIWRGNQAIARGMDAAQSHYMGMLATIINALALQDALERRGIFTRAMTAIKMDEVAEPYIRRRATRHLEKGRVIILAAGTGNPYFTTDSAAALRAAEVHAEVILMAKNGVDGVYSADPRRYPDAKRFEYISYMEALSRGLTVMDSTALTFCMDNNIPIIVFDPLTPGNIERIVMGEHVGTLVSSHPSQ.

Residue Lys12–Gly15 coordinates ATP. Gly54 provides a ligand contact to UMP. ATP-binding residues include Gly55 and Arg59. A UMP-binding site is contributed by Thr135–Thr142. Residues Asn163, Tyr169, and Asp172 each coordinate ATP.

It belongs to the UMP kinase family. As to quaternary structure, homohexamer.

It is found in the cytoplasm. It catalyses the reaction UMP + ATP = UDP + ADP. It functions in the pathway pyrimidine metabolism; CTP biosynthesis via de novo pathway; UDP from UMP (UMPK route): step 1/1. With respect to regulation, inhibited by UTP. Catalyzes the reversible phosphorylation of UMP to UDP. This Roseiflexus sp. (strain RS-1) protein is Uridylate kinase.